The sequence spans 266 residues: MRKNTYAMRYVAGQPAERILPPGSFASIGQALPPGEPLSTEERIRILVWNIYKQQRAEWLSVLKNYGKDAHLVLLQEAQTTPELVQFATANYLAADQVPAFVLPQHPSGVMTLSAAHPVYCCPLREREPILRLAKSALVTVYPLPDTRLLMVINIHAVNFSLGVDVYSKQLLPIGDQIAHHSGPVIMAGDFNAWSRRRMNALYRFAREMSLRQVRFTDDQRRRAFGRPLDFVFYRGLNVSEASVLVTRASDHNPLLVEFSPGKPDK.

Belongs to the UPF0294 family.

Its subcellular location is the cytoplasm. The protein is UPF0294 protein YafD of Shigella dysenteriae serotype 1 (strain Sd197).